The following is a 121-amino-acid chain: Holin-like protein CidA 1 (121 aa).

4 helical membrane passes run 7 to 24 (SGQI…EWIA), 28 to 50 (HLPV…FNLV), 62 to 81 (LLKE…IRYR), and 91 to 113 (LILI…TELL).

It belongs to the CidA/LrgA family. CidA subfamily.

It is found in the cell membrane. Functionally, increases the activity of extracellular murein hydrolases possibly by mediating their export via hole formation. Inhibited by the antiholin-like proteins LrgAB. In an unstressed cell, the LrgAB products probably inhibit the function of the CidA protein. When a cell is stressed by the addition of antibiotics or by other factors in the environment, CidA possibly oligomerizes within the bacterial cell membrane, creating lesions that disrupt the proton motive force, which in turn results in loss of cell viability. These lesions are also hypothesized to regulate the subsequent cell lysis by either allowing the murein hydrolases access to the cell wall substrate and/or regulating their activity by a possible change in the cell wall pH that results from loss of membrane potential. This chain is Holin-like protein CidA 1 (cidA1), found in Bacillus cereus (strain ATCC 14579 / DSM 31 / CCUG 7414 / JCM 2152 / NBRC 15305 / NCIMB 9373 / NCTC 2599 / NRRL B-3711).